Consider the following 100-residue polypeptide: Urease subunit gamma (100 aa).

The protein belongs to the urease gamma subunit family. Heterotrimer of UreA (gamma), UreB (beta) and UreC (alpha) subunits. Three heterotrimers associate to form the active enzyme.

The protein localises to the cytoplasm. It carries out the reaction urea + 2 H2O + H(+) = hydrogencarbonate + 2 NH4(+). The protein operates within nitrogen metabolism; urea degradation; CO(2) and NH(3) from urea (urease route): step 1/1. The protein is Urease subunit gamma of Escherichia coli O157:H7 (strain EC4115 / EHEC).